The sequence spans 862 residues: Protein JOKA2 (862 aa).

The 85-residue stretch at 6 to 90 (SIVIKVKYEE…NPLRISARLN (85 aa)) folds into the PB1 domain. The span at 92 to 106 (GERSGRASARSSGNS) shows a compositional bias: low complexity. 3 disordered regions span residues 92-117 (GERS…VQPP), 194-234 (KGNT…ASNE), and 295-345 (VRNS…DSSG). Residues 325–345 (SASSSKVKQCNWDSPNADSSG) are compositionally biased toward polar residues. The segment at 442–492 (HKGVRCDGCGVHPITGPRFISKVKENYDLCSICFAEMGNDADYIRMDRPLT) adopts a ZZ-type; degenerate zinc-finger fold. Cys447, Cys450, Cys471, and Cys474 together coordinate Zn(2+). The 50-residue stretch at 811-860 (SVDDLCGVAEWDPILEELKEMGFCDKEMNKKLLKKNNGSIKRVVMDLIAG) folds into the UBA domain. The ATG8 interacting motif (AIM) motif lies at 817–824 (GVAEWDPI).

Interacts (via C-terminal AIM motif) with ATG8CL.

It localises to the vacuole. Its subcellular location is the cytoplasmic vesicle. The protein localises to the autophagosome. In terms of biological role, autophagic substrate that functions as a host autophagy cargo receptor. Requires ATG8 protein expression to be recognized as an autophagic substrate. Activates ATG8CL-mediated selective autophagy, and contributes to defense against the fungal pathogen Phytophtora infestans. The protein is Protein JOKA2 of Solanum tuberosum (Potato).